Reading from the N-terminus, the 172-residue chain is Shikimate kinase (172 aa).

Residue Gly11–Thr16 coordinates ATP. Ser15 is a binding site for Mg(2+). Positions 33, 57, and 79 each coordinate substrate. Arg117 lines the ATP pocket. Arg136 provides a ligand contact to substrate. Arg153 is an ATP binding site.

It belongs to the shikimate kinase family. In terms of assembly, monomer. Mg(2+) serves as cofactor.

It localises to the cytoplasm. The catalysed reaction is shikimate + ATP = 3-phosphoshikimate + ADP + H(+). It functions in the pathway metabolic intermediate biosynthesis; chorismate biosynthesis; chorismate from D-erythrose 4-phosphate and phosphoenolpyruvate: step 5/7. Functionally, catalyzes the specific phosphorylation of the 3-hydroxyl group of shikimic acid using ATP as a cosubstrate. This chain is Shikimate kinase, found in Pseudomonas paraeruginosa (strain DSM 24068 / PA7) (Pseudomonas aeruginosa (strain PA7)).